Reading from the N-terminus, the 660-residue chain is Bifunctional polymyxin resistance protein ArnA (660 aa).

Positions 1–304 (MKAVIFAYHD…ALGLVKGALL (304 aa)) are formyltransferase ArnAFT. Residue His104 is the Proton donor; for formyltransferase activity of the active site. Residues Arg114 and 136-140 (TARAD) each bind (6R)-10-formyltetrahydrofolate. A dehydrogenase ArnADH region spans residues 314–660 (RRTRVLILGV…QTVDLPDAAQ (347 aa)). NAD(+)-binding positions include Asp347 and 368–369 (DI). Residues Ala393, Tyr398, and 432–433 (TS) each bind UDP-alpha-D-glucuronate. Glu434 (proton acceptor; for decarboxylase activity) is an active-site residue. UDP-alpha-D-glucuronate contacts are provided by residues Arg460, Asn492, 526–535 (KLVDGGAQKR), and Tyr613. Arg619 (proton donor; for decarboxylase activity) is an active-site residue.

In the N-terminal section; belongs to the Fmt family. UDP-L-Ara4N formyltransferase subfamily. This sequence in the C-terminal section; belongs to the NAD(P)-dependent epimerase/dehydratase family. UDP-glucuronic acid decarboxylase subfamily. Homohexamer, formed by a dimer of trimers.

The enzyme catalyses UDP-alpha-D-glucuronate + NAD(+) = UDP-beta-L-threo-pentopyranos-4-ulose + CO2 + NADH. It catalyses the reaction UDP-4-amino-4-deoxy-beta-L-arabinose + (6R)-10-formyltetrahydrofolate = UDP-4-deoxy-4-formamido-beta-L-arabinose + (6S)-5,6,7,8-tetrahydrofolate + H(+). Its pathway is nucleotide-sugar biosynthesis; UDP-4-deoxy-4-formamido-beta-L-arabinose biosynthesis; UDP-4-deoxy-4-formamido-beta-L-arabinose from UDP-alpha-D-glucuronate: step 1/3. It functions in the pathway nucleotide-sugar biosynthesis; UDP-4-deoxy-4-formamido-beta-L-arabinose biosynthesis; UDP-4-deoxy-4-formamido-beta-L-arabinose from UDP-alpha-D-glucuronate: step 3/3. The protein operates within bacterial outer membrane biogenesis; lipopolysaccharide biosynthesis. Its function is as follows. Bifunctional enzyme that catalyzes the oxidative decarboxylation of UDP-glucuronic acid (UDP-GlcUA) to UDP-4-keto-arabinose (UDP-Ara4O) and the addition of a formyl group to UDP-4-amino-4-deoxy-L-arabinose (UDP-L-Ara4N) to form UDP-L-4-formamido-arabinose (UDP-L-Ara4FN). The modified arabinose is attached to lipid A and is required for resistance to polymyxin and cationic antimicrobial peptides. The protein is Bifunctional polymyxin resistance protein ArnA of Sodalis glossinidius (strain morsitans).